Consider the following 84-residue polypeptide: ATP synthase subunit c (84 aa).

The next 2 helical transmembrane spans lie at 13–33 (IAVG…WGLI) and 56–76 (FIFA…GFWF).

Belongs to the ATPase C chain family. F-type ATPases have 2 components, F(1) - the catalytic core - and F(0) - the membrane proton channel. F(1) has five subunits: alpha(3), beta(3), gamma(1), delta(1), epsilon(1). F(0) has three main subunits: a(1), b(2) and c(10-14). The alpha and beta chains form an alternating ring which encloses part of the gamma chain. F(1) is attached to F(0) by a central stalk formed by the gamma and epsilon chains, while a peripheral stalk is formed by the delta and b chains.

The protein resides in the cell inner membrane. Functionally, f(1)F(0) ATP synthase produces ATP from ADP in the presence of a proton or sodium gradient. F-type ATPases consist of two structural domains, F(1) containing the extramembraneous catalytic core and F(0) containing the membrane proton channel, linked together by a central stalk and a peripheral stalk. During catalysis, ATP synthesis in the catalytic domain of F(1) is coupled via a rotary mechanism of the central stalk subunits to proton translocation. In terms of biological role, key component of the F(0) channel; it plays a direct role in translocation across the membrane. A homomeric c-ring of between 10-14 subunits forms the central stalk rotor element with the F(1) delta and epsilon subunits. The protein is ATP synthase subunit c of Acidithiobacillus ferrooxidans (strain ATCC 23270 / DSM 14882 / CIP 104768 / NCIMB 8455) (Ferrobacillus ferrooxidans (strain ATCC 23270)).